The sequence spans 578 residues: A-type ATP synthase subunit A (578 aa).

ATP is bound at residue 228–235 (GPFGSGKT).

This sequence belongs to the ATPase alpha/beta chains family. As to quaternary structure, has multiple subunits with at least A(3), B(3), C, D, E, F, H, I and proteolipid K(x).

It localises to the cell membrane. The catalysed reaction is ATP + H2O + 4 H(+)(in) = ADP + phosphate + 5 H(+)(out). Its function is as follows. Component of the A-type ATP synthase that produces ATP from ADP in the presence of a proton gradient across the membrane. The A chain is the catalytic subunit. In Methanosarcina barkeri (strain Fusaro / DSM 804), this protein is A-type ATP synthase subunit A.